We begin with the raw amino-acid sequence, 63 residues long: Large ribosomal subunit protein bL28 (63 aa).

It belongs to the bacterial ribosomal protein bL28 family.

The sequence is that of Large ribosomal subunit protein bL28 from Syntrophotalea carbinolica (strain DSM 2380 / NBRC 103641 / GraBd1) (Pelobacter carbinolicus).